We begin with the raw amino-acid sequence, 262 residues long: Short-chain Z-isoprenyl diphosphate synthase (262 aa).

The active site involves Asp40. Residue Asp40 participates in Mg(2+) binding. Substrate is bound by residues 41-44 (GNRR), Trp45, and 86-88 (STE). Catalysis depends on Asn89, which acts as the Proton acceptor. Residues Arg92, Arg211, and 217–219 (RLS) each bind substrate. Glu230 lines the Mg(2+) pocket.

The protein belongs to the UPP synthase family. Z-FPP synthase subfamily. The cofactor is Mg(2+).

It carries out the reaction isopentenyl diphosphate + (2E)-geranyl diphosphate = (2Z,6E)-farnesyl diphosphate + diphosphate. The protein operates within phospholipid metabolism; decaprenyl phosphate biosynthesis. Generates Z-farnesyl diphosphate (Z-FPP) from isopentenyl pyrophosphate (IPP). Z-FPP is the precursor of decaprenyl diphosphate, which has a central role in the biosynthesis of the mycobacterial cell wall. The protein is Short-chain Z-isoprenyl diphosphate synthase of Mycobacterium leprae (strain TN).